A 326-amino-acid chain; its full sequence is Protein FAM50 homolog (326 aa).

Residues 76–112 form a disordered region; it reads EISNRDLQVARGASSSTSLAKDSQEAREKEEHVAKHT. A compositionally biased stretch (basic and acidic residues) spans 97–109; that stretch reads DSQEAREKEEHVA.

This sequence belongs to the FAM50 family.

This chain is Protein FAM50 homolog, found in Caenorhabditis briggsae.